The following is a 217-amino-acid chain: Ran-binding protein 1 homolog b (217 aa).

Disordered regions lie at residues 1–32 and 160–217; these read MASI…QVAP and ESEE…VPSA. Ala-2 carries the post-translational modification N-acetylalanine. The span at 14 to 26 shows a compositional bias: acidic residues; it reads DEEETGANEDEDT. Residues 29–164 enclose the RanBD1 domain; it reads QVAPIVRLEE…FKEVAESEEE (136 aa). Residues 181–217 are compositionally biased toward basic and acidic residues; that stretch reads LTVEEKESEKKPVEKAEENKKSEAVEEKKTEESVPSA.

As to quaternary structure, interacts with the GTP-bound form of RAN1, RAN2 and RAN3.

The protein localises to the nucleus. It is found in the nuclear pore complex. In Arabidopsis thaliana (Mouse-ear cress), this protein is Ran-binding protein 1 homolog b (RANBP1B).